We begin with the raw amino-acid sequence, 122 residues long: MKVLIISAVLFITIFSNISAEIEDDFLEDESFEAEDIIPFFENEQARSCIPKHEECTNDKHNCCRKGLFKLKCQCSTFDDESGQPTERCACGRPMGHQAIETGLNIFRGLFKGKKKNKKTKG.

The first 20 residues, 1–20, serve as a signal peptide directing secretion; that stretch reads MKVLIISAVLFITIFSNISA. A propeptide spanning residues 21-47 is cleaved from the precursor; it reads EIEDDFLEDESFEAEDIIPFFENEQAR. Cystine bridges form between cysteine 49/cysteine 64, cysteine 56/cysteine 73, cysteine 63/cysteine 91, and cysteine 75/cysteine 89. The predicted alpha-helix stretch occupies residues 99-112; sequence AIETGLNIFRGLFK. Arginine 108 bears the Arginine amide; in CSTX-2a mark. Lysine 121 carries the post-translational modification Lysine amide; in omega-ctenitoxin-Cs1a.

The protein belongs to the neurotoxin 19 (CSTX) family. 04 (U1-Lctx) subfamily. Monomer. Interacts with CSTX-13 (AC P83919) (Kd=430 nM), but does not interact with CSTX-9 (AC P58604). In terms of tissue distribution, expressed by the venom gland.

It is found in the secreted. The protein localises to the target cell membrane. In terms of biological role, spider venom toxin that shows calcium channel blocking activity and exhibits cytolytic activity by affecting the outer leaflet curvature and/or pore formation across the membrane. It blocks L-type calcium channels (Cav1/CACNA1) in mammalian neurons at nanomolar concentrations. Furthermore, it produces a slow voltage-independent block of mid/low and high voltage-activated calcium channels in cockroach neurons. Potassium ions, histamine, M-ctenitoxin-Cs1a (AC P83619), CSTX-9 (AC P58604), and CSTX-13 (AC P83919) synergistically increase the insecticidal activity of this toxin. In vivo, it causes paralysis in blow flies and provokes death in drosophila. Its function is as follows. Blocks voltage-activated calcium channels (Cav). Does not induce cell membrane permeability increase when tested on Xenopus oocytes. No alpha-helical structures are detectable. Is 7-fold less neurotoxic than omega-ctenitoxin-Cs1a on drosophila flies. Blocks voltage-activated calcium channels (Cav). Is 190-fold less neurotoxic than omega-ctenitoxin-Cs1a on drosophila flies. The chain is Toxin CSTX-1 from Cupiennius salei (American wandering spider).